Here is a 259-residue protein sequence, read N- to C-terminus: Adenylosuccinate synthetase (259 aa).

GTP-binding positions include 3–9 (GDEGKGK) and 31–33 (GHT). D4 functions as the Proton acceptor in the catalytic mechanism. Mg(2+) is bound by residues D4 and G31. 4-7 (DEGK) serves as a coordination point for IMP. The active-site Proton donor is H32. Residues T120, R134, Q215, and T230 each contribute to the IMP site.

This sequence belongs to the adenylosuccinate synthetase family. In terms of assembly, homodimer. Mg(2+) is required as a cofactor.

It is found in the cytoplasm. The catalysed reaction is IMP + L-aspartate + GTP = N(6)-(1,2-dicarboxyethyl)-AMP + GDP + phosphate + 2 H(+). It functions in the pathway purine metabolism; AMP biosynthesis via de novo pathway; AMP from IMP: step 1/2. Functionally, plays an important role in the de novo pathway of purine nucleotide biosynthesis. Catalyzes the first committed step in the biosynthesis of AMP from IMP. The sequence is that of Adenylosuccinate synthetase from Aggregatibacter actinomycetemcomitans (Actinobacillus actinomycetemcomitans).